Reading from the N-terminus, the 137-residue chain is Probable 4-amino-4-deoxy-L-arabinose-phosphoundecaprenol flippase subunit ArnF (137 aa).

Transmembrane regions (helical) follow at residues 43-63, 74-94, and 98-118; these read AIAV…FWLL, YSLL…LPFF, and FTVS…TINL.

This sequence belongs to the ArnF family. As to quaternary structure, heterodimer of ArnE and ArnF.

It localises to the cell inner membrane. The protein operates within bacterial outer membrane biogenesis; lipopolysaccharide biosynthesis. Translocates 4-amino-4-deoxy-L-arabinose-phosphoundecaprenol (alpha-L-Ara4N-phosphoundecaprenol) from the cytoplasmic to the periplasmic side of the inner membrane. This chain is Probable 4-amino-4-deoxy-L-arabinose-phosphoundecaprenol flippase subunit ArnF, found in Pseudomonas savastanoi pv. phaseolicola (strain 1448A / Race 6) (Pseudomonas syringae pv. phaseolicola (strain 1448A / Race 6)).